The primary structure comprises 240 residues: Regulatory protein RecX (240 aa).

This sequence belongs to the RecX family.

It localises to the cytoplasm. Modulates RecA activity. The sequence is that of Regulatory protein RecX from Lacticaseibacillus paracasei (strain ATCC 334 / BCRC 17002 / CCUG 31169 / CIP 107868 / KCTC 3260 / NRRL B-441) (Lactobacillus paracasei).